The chain runs to 277 residues: uncharacterized protein (277 aa).

Helical transmembrane passes span 23 to 43, 61 to 81, 117 to 137, 144 to 164, 197 to 217, 221 to 241, and 243 to 263; these read CIGGLMSAIVGAMSGVTTAFI, FLIYFGIIFIIGLIVSAIIGG, LVLLNIIFYFIPAILFVFGIF, IIGAFLIIISILIFIISVISL, YIILVIIIAIINFIISLIVVL, IIDIFISYSALANSILTIIYI, and IKGISYALSTFVDFYLGVFSI.

The protein to M.jannaschii MJ1189.

It localises to the cell membrane. This is an uncharacterized protein from Methanocaldococcus jannaschii (strain ATCC 43067 / DSM 2661 / JAL-1 / JCM 10045 / NBRC 100440) (Methanococcus jannaschii).